Here is a 336-residue protein sequence, read N- to C-terminus: Inositol 2-dehydrogenase (336 aa).

The protein belongs to the Gfo/Idh/MocA family. As to quaternary structure, homotetramer.

The catalysed reaction is myo-inositol + NAD(+) = scyllo-inosose + NADH + H(+). In terms of biological role, involved in the oxidation of myo-inositol (MI) to 2-keto-myo-inositol (2KMI or 2-inosose). The protein is Inositol 2-dehydrogenase of Pseudomonas savastanoi pv. phaseolicola (strain 1448A / Race 6) (Pseudomonas syringae pv. phaseolicola (strain 1448A / Race 6)).